Reading from the N-terminus, the 111-residue chain is Probable 4-amino-4-deoxy-L-arabinose-phosphoundecaprenol flippase subunit ArnE (111 aa).

The Cytoplasmic segment spans residues 1 to 35 (MIWLTLVFASLLSVAGQLCQKQATCFVAISKRRKH). The chain crosses the membrane as a helical span at residues 36–56 (IVLWLGLALACLGLAMVLWLL). Positions 40–109 (LGLALACLGL…IIGGIVILGS (70 aa)) constitute an EamA domain. Residues 57 to 60 (VLQN) lie on the Periplasmic side of the membrane. A helical transmembrane segment spans residues 61 to 81 (VPVGIAYPMLSLNFVWVTLAA). Residues 82–87 (VKLWHE) lie on the Cytoplasmic side of the membrane. The helical transmembrane segment at 88-108 (PVSPRHWCGVAFIIGGIVILG) threads the bilayer. Residues 109-111 (STV) lie on the Periplasmic side of the membrane.

The protein belongs to the ArnE family. Heterodimer of ArnE and ArnF.

It is found in the cell inner membrane. It functions in the pathway bacterial outer membrane biogenesis; lipopolysaccharide biosynthesis. Functionally, translocates 4-amino-4-deoxy-L-arabinose-phosphoundecaprenol (alpha-L-Ara4N-phosphoundecaprenol) from the cytoplasmic to the periplasmic side of the inner membrane. In Escherichia coli O157:H7, this protein is Probable 4-amino-4-deoxy-L-arabinose-phosphoundecaprenol flippase subunit ArnE.